The primary structure comprises 493 residues: Cytochrome P450 monooxygenase esdpG (493 aa).

A helical membrane pass occupies residues 10–30; it reads VLGVTWLSALFTLGSLSVFWL. Cys434 is a heme binding site.

It belongs to the cytochrome P450 family. It depends on heme as a cofactor.

Its subcellular location is the membrane. It functions in the pathway secondary metabolite biosynthesis; terpenoid biosynthesis. Cytochrome P450 monooxygenasee; part of the cluster that mediates the biosynthesis of shearones, diterpenoid pyrones (DPs) which are structurally diverse meroterpenoids consisting of a diterpene linked by a pyrone, and which may exhibit a range of bioactivities. Whitin the pathway, esdpG takes part in the molecular scaffold modification via the hydroxylation at C-11 and C-12 and can transform shearone A into shearone C and shearone B into shearone D. The molecular scaffold is commonly biosynthesized by a series of enzymes including the non-reducing polyketide synthase (NR-PKS) esdpA that generates an alpha-pyrone; the prenyltransferase esdpC that attaches a geranylgeranyl pyrophosphate (GGPP) produced by the GGPP synthase (GGPPS) esdpD onto the pyrone unit; the FAD-dependent monooxygenase esdpE that converts an olefin on the diterpene unit into an epoxide; and the terpene cyclase esdpB that catalyzes the cyclization reactions to give the molecular backbone shearone A. In the modification steps, esdpF oxidizes the hydroxy group to a ketone at C-3 and esdpG then attaches hydroxy groups at both C-11 and C-12. After that, esdpI hydroxylates at C-20 and esdpH hydroxylates at C-6'. The ether bridge is generated by nucleophilic attack of the hydroxy group at C-20 to the carbonyl carbon at C-3. EsdpH can also functions prior to esdpI. The different combinations of these modification enzymes lead to the production of diverse shearone derivatives, shearone I being the end product of the pathway. The alpha-ketoglutarate-dependent dioxygenase esdpJ seems not to be involved in this pathway. This chain is Cytochrome P450 monooxygenase esdpG, found in Penicillium shearii (Eupenicillium shearii).